A 201-amino-acid polypeptide reads, in one-letter code: Peptidyl-tRNA hydrolase (201 aa).

Position 14 (tyrosine 14) interacts with tRNA. Histidine 19 (proton acceptor) is an active-site residue. TRNA is bound by residues tyrosine 64, asparagine 66, and asparagine 112.

The protein belongs to the PTH family. In terms of assembly, monomer.

The protein localises to the cytoplasm. The enzyme catalyses an N-acyl-L-alpha-aminoacyl-tRNA + H2O = an N-acyl-L-amino acid + a tRNA + H(+). In terms of biological role, hydrolyzes ribosome-free peptidyl-tRNAs (with 1 or more amino acids incorporated), which drop off the ribosome during protein synthesis, or as a result of ribosome stalling. Functionally, catalyzes the release of premature peptidyl moieties from peptidyl-tRNA molecules trapped in stalled 50S ribosomal subunits, and thus maintains levels of free tRNAs and 50S ribosomes. This is Peptidyl-tRNA hydrolase from Bradyrhizobium sp. (strain ORS 278).